Here is an 844-residue protein sequence, read N- to C-terminus: Translation initiation factor IF-2 (844 aa).

A compositionally biased stretch (polar residues) spans 120–132 (RNSVNLVQPQQEK). A disordered region spans residues 120 to 220 (RNSVNLVQPQ…SGKGFKKANP (101 aa)). Over residues 161 to 175 (DEEKSSEDKSTESKN) the composition is skewed to basic and acidic residues. A compositionally biased stretch (basic residues) spans 205 to 219 (SKAKKASGKGFKKAN). One can recognise a tr-type G domain in the interval 343-510 (SRAPVVTIMG…AVLLQSEVLE (168 aa)). The segment at 352–359 (GHVDHGKT) is G1. GTP is bound at residue 352–359 (GHVDHGKT). A G2 region spans residues 377-381 (GITQH). Residues 398 to 401 (DTPG) are G3. GTP-binding positions include 398 to 402 (DTPGH) and 452 to 455 (NKID). A G4 region spans residues 452–455 (NKID). The G5 stretch occupies residues 488-490 (SAK).

This sequence belongs to the TRAFAC class translation factor GTPase superfamily. Classic translation factor GTPase family. IF-2 subfamily.

The protein resides in the cytoplasm. In terms of biological role, one of the essential components for the initiation of protein synthesis. Protects formylmethionyl-tRNA from spontaneous hydrolysis and promotes its binding to the 30S ribosomal subunits. Also involved in the hydrolysis of GTP during the formation of the 70S ribosomal complex. In Francisella philomiragia subsp. philomiragia (strain ATCC 25017 / CCUG 19701 / FSC 153 / O#319-036), this protein is Translation initiation factor IF-2.